The following is a 493-amino-acid chain: Membrane-bound lytic murein transglycosylase F (493 aa).

The first 21 residues, 1–21, serve as a signal peptide directing secretion; the sequence is MKRLRFNYLLIGLITVLLALA. A non-LT domain region spans residues 22–268; sequence LWPSIPWYGG…RLDEKYLGHV (247 aa). An LT domain region spans residues 269–493; sequence GTFDYVDTRT…LNPVSALPLP (225 aa). Glu313 is an active-site residue.

It in the N-terminal section; belongs to the bacterial solute-binding protein 3 family. In the C-terminal section; belongs to the transglycosylase Slt family.

The protein resides in the cell outer membrane. The catalysed reaction is Exolytic cleavage of the (1-&gt;4)-beta-glycosidic linkage between N-acetylmuramic acid (MurNAc) and N-acetylglucosamine (GlcNAc) residues in peptidoglycan, from either the reducing or the non-reducing ends of the peptidoglycan chains, with concomitant formation of a 1,6-anhydrobond in the MurNAc residue.. Its function is as follows. Murein-degrading enzyme that degrades murein glycan strands and insoluble, high-molecular weight murein sacculi, with the concomitant formation of a 1,6-anhydromuramoyl product. Lytic transglycosylases (LTs) play an integral role in the metabolism of the peptidoglycan (PG) sacculus. Their lytic action creates space within the PG sacculus to allow for its expansion as well as for the insertion of various structures such as secretion systems and flagella. The polypeptide is Membrane-bound lytic murein transglycosylase F (Erwinia tasmaniensis (strain DSM 17950 / CFBP 7177 / CIP 109463 / NCPPB 4357 / Et1/99)).